Consider the following 138-residue polypeptide: Thyrotropin subunit beta (138 aa).

Positions 1–20 (MTALFLMSMLFGLTCGQAMS) are cleaved as a signal peptide. Cystine bridges form between Cys22/Cys72, Cys36/Cys87, Cys39/Cys125, Cys47/Cys103, Cys51/Cys105, and Cys108/Cys115. N-linked (GlcNAc...) asparagine glycosylation occurs at Asn43. Residues 133–138 (LVGFSV) constitute a propeptide that is removed on maturation.

It belongs to the glycoprotein hormones subunit beta family. As to quaternary structure, heterodimer of a common alpha chain and a unique beta chain which confers biological specificity to thyrotropin, lutropin, follitropin and gonadotropin.

The protein resides in the secreted. Functionally, indispensable for the control of thyroid structure and metabolism. The polypeptide is Thyrotropin subunit beta (TSHB) (Homo sapiens (Human)).